The primary structure comprises 372 residues: GTPase Obg (372 aa).

Positions 1-159 (MKFIDEARIE…RMLKLELKVL (159 aa)) constitute an Obg domain. The interval 128–147 (LHFKSSTNRAPRQKTDGKPG) is disordered. The OBG-type G domain maps to 160 to 334 (ADVGLLGMPN…LVYAIYDYLA (175 aa)). Residues 166–173 (GMPNAGKS), 191–195 (FTTLA), 213–216 (DIPG), 284–287 (NKLD), and 315–317 (SAL) each bind GTP. Mg(2+)-binding residues include S173 and T193.

Belongs to the TRAFAC class OBG-HflX-like GTPase superfamily. OBG GTPase family. As to quaternary structure, monomer. The cofactor is Mg(2+).

It localises to the cytoplasm. An essential GTPase which binds GTP, GDP and possibly (p)ppGpp with moderate affinity, with high nucleotide exchange rates and a fairly low GTP hydrolysis rate. Plays a role in control of the cell cycle, stress response, ribosome biogenesis and in those bacteria that undergo differentiation, in morphogenesis control. The chain is GTPase Obg from Burkholderia thailandensis (strain ATCC 700388 / DSM 13276 / CCUG 48851 / CIP 106301 / E264).